The following is a 2025-amino-acid chain: E3 ubiquitin-protein ligase TRIP12 (2025 aa).

Over residues 1–10 (MSNRPNNNPG) the composition is skewed to polar residues. The segment at 1-404 (MSNRPNNNPG…SGESESDDSE (404 aa)) is disordered. Ser-2 carries the N-acetylserine modification. Phosphoserine is present on Ser-12. Over residues 18 to 27 (RNTAGAQPQD) the composition is skewed to polar residues. Residues 48-70 (DPDRANTSERQKTGQVPKKDNSR) show a composition bias toward basic and acidic residues. Ser-77, Ser-85, and Ser-100 each carry phosphoserine. Composition is skewed to polar residues over residues 78–88 (PDYNRTNSPSS), 99–108 (ESLSETNKPP), and 119–132 (EQQL…STSK). Composition is skewed to low complexity over residues 154 to 166 (SSCV…SEST) and 175 to 216 (PTKL…SSTV). At Lys-181 the chain carries N6-acetyllysine. Residues 280 to 290 (PGSSKSETSKP) are compositionally biased toward polar residues. Phosphoserine occurs at positions 310 and 312. The span at 326 to 338 (QKTTGSCASTSRR) shows a compositional bias: polar residues. Residues 346 to 358 (GAAEARRQEKMAD) are compositionally biased toward basic and acidic residues. The span at 362–371 (NQETVNSSAA) shows a compositional bias: polar residues. Low complexity predominate over residues 379–397 (GAAASSSVAGAVGMTTSGE). The WWE domain occupies 755 to 869 (MLKKGNAQNT…DPELAKSFIK (115 aa)). Residues 970–1077 (ESLLTSPPKA…QSPKSSFLAS (108 aa)) form a disordered region. Ser-975 is subject to Phosphoserine. Over residues 983 to 1006 (GSGSLGSTTPASSGTATAATNASA) the composition is skewed to low complexity. Residues Ser-1024 and Ser-1030 each carry the phosphoserine modification. Residues 1034–1047 (KRKRLPKRGPRRPK) show a composition bias toward basic residues. Ser-1049 carries the phosphoserine modification. Residues 1050 to 1059 (PPRDDDKVDN) are compositionally biased toward basic and acidic residues. The span at 1062 to 1073 (KSPTTTQSPKSS) shows a compositional bias: low complexity. A phosphoserine mark is found at Ser-1063, Ser-1350, Ser-1355, Ser-1362, and Ser-1409. Thr-1410 is modified (phosphothreonine). Disordered stretches follow at residues 1440-1466 (SSKD…NAKK) and 1601-1620 (TNPE…PRLD). Lys-1458 is subject to N6-acetyllysine. Ser-1460 is modified (phosphoserine). Residues 1529–1603 (EIIPTSEFIN…AMQRLLDTNP (75 aa)) form a K-box region. The HECT domain maps to 1918-2025 (PDHGYTHDSR…REGQQSFHLS (108 aa)). The active-site Glycyl thioester intermediate is Cys-1992.

It belongs to the UPL family. K-HECT subfamily. In terms of assembly, interacts with MYC; leading to disrupt interaction with isoform p19ARF/ARF of CDKN2A. Interacts with TRADD; leading to disrupt interaction with isoform p19ARF/ARF of CDKN2A. Interacts with SMARCC1; leading to disrupt interaction with SMARCE1.

It localises to the nucleus. Its subcellular location is the nucleoplasm. It catalyses the reaction S-ubiquitinyl-[E2 ubiquitin-conjugating enzyme]-L-cysteine + [acceptor protein]-L-lysine = [E2 ubiquitin-conjugating enzyme]-L-cysteine + N(6)-ubiquitinyl-[acceptor protein]-L-lysine.. The protein operates within protein modification; protein ubiquitination. Its function is as follows. E3 ubiquitin-protein ligase involved in ubiquitin fusion degradation (UFD) pathway and regulation of DNA repair. Part of the ubiquitin fusion degradation (UFD) pathway, a process that mediates ubiquitination of protein at their N-terminus, regardless of the presence of lysine residues in target proteins. Acts as a key regulator of DNA damage response by acting as a suppressor of RNF168, an E3 ubiquitin-protein ligase that promotes accumulation of 'Lys-63'-linked histone H2A and H2AX at DNA damage sites, thereby acting as a guard against excessive spreading of ubiquitinated chromatin at damaged chromosomes. In normal cells, mediates ubiquitination and degradation of isoform p19ARF/ARF of CDKN2A, a lysine-less tumor suppressor required for p53/TP53 activation under oncogenic stress. In cancer cells, however, isoform p19ARF/ARF and TRIP12 are located in different cell compartments, preventing isoform p19ARF/ARF ubiquitination and degradation. Does not mediate ubiquitination of isoform p16-INK4a of CDKN2A. Also catalyzes ubiquitination of NAE1 and SMARCE1, leading to their degradation. Ubiquitination and degradation of target proteins is regulated by interaction with proteins such as MYC, TRADD or SMARCC1, which disrupt the interaction between TRIP12 and target proteins. Mediates ubiquitination of ASXL1: following binding to N(6)-methyladenosine methylated DNA, ASXL1 is ubiquitinated by TRIP12, leading to its degradation and subsequent inactivation of the PR-DUB complex. This chain is E3 ubiquitin-protein ligase TRIP12 (Trip12), found in Rattus norvegicus (Rat).